Consider the following 653-residue polypeptide: Cell wall adhesin EAP1 (653 aa).

An N-terminal signal peptide occupies residues 1–18; it reads MKVSQILPLAGAISVASG. Positions 19 to 146 are N-terminal cell-cell adhesion domain; it reads FWIPDFSNKQ…EYTTYCPLTS (128 aa). The interval 144 to 267 is disordered; that stretch reads LTSTPATEST…TETASSTPVE (124 aa). Residues 145–267 show a composition bias toward low complexity; the sequence is TSTPATESTP…TETASSTPVE (123 aa). A run of 15 repeats spans residues 147-152, 153-158, 159-164, 165-170, 171-176, 177-182, 192-197, 198-203, 204-209, 210-215, 216-221, 222-227, 228-233, 234-248, and 249-254. The segment at 147-254 is 15 X 6 AA tandem repeats, Ser/Thr-rich; sequence TPATESTPAT…STETTPATES (108 aa). N-linked (GlcNAc...) asparagine glycosylation is present at asparagine 323. Disordered regions lie at residues 324 to 540 and 572 to 595; these read TSTP…TTQP and EGGCVPEGQQTETSPSVPTNGPEV. Tandem repeats lie at residues 326-345, 346-365, 366-389, 390-413, 414-433, 434-457, 458-477, 478-501, 502-521, and 522-541. A 10 X 20 AA approximate tandem repeats region spans residues 326–541; sequence TPAAPGTPVE…EATPVTTQPV (216 aa). 2 stretches are compositionally biased toward low complexity: residues 341-353 and 361-538; these read PGTETTPAAPGTP and PGTE…PVTT. Positions 579–590 are enriched in polar residues; that stretch reads GQQTETSPSVPT. Residue glycine 632 is the site of GPI-anchor amidated glycine attachment. Residues 633-653 constitute a propeptide, removed in mature form; that stretch reads SGSALKKPYYGLAVAALVYFM.

The protein belongs to the PGA18 family. The GPI-anchor is attached to the protein in the endoplasmic reticulum and serves to target the protein to the cell surface. There, the glucosamine-inositol phospholipid moiety is cleaved off and the GPI-modified mannoprotein is covalently attached via its lipidless GPI glycan remnant to the 1,6-beta-glucan of the outer cell wall layer.

It is found in the secreted. The protein localises to the cell wall. Its subcellular location is the membrane. In terms of biological role, cell wall protein which mediates cell-cell and cell-substrate adhesion. Required for biofilm formation and plays a role in virulence. The sequence is that of Cell wall adhesin EAP1 (EAP1) from Candida albicans (strain SC5314 / ATCC MYA-2876) (Yeast).